The following is a 298-amino-acid chain: Acetylglutamate kinase (298 aa).

Residues Gly69–Gly70, Arg91, and Asn191 each bind substrate.

Belongs to the acetylglutamate kinase family. ArgB subfamily.

It is found in the cytoplasm. It catalyses the reaction N-acetyl-L-glutamate + ATP = N-acetyl-L-glutamyl 5-phosphate + ADP. Its pathway is amino-acid biosynthesis; L-arginine biosynthesis; N(2)-acetyl-L-ornithine from L-glutamate: step 2/4. Functionally, catalyzes the ATP-dependent phosphorylation of N-acetyl-L-glutamate. This Neisseria gonorrhoeae (strain ATCC 700825 / FA 1090) protein is Acetylglutamate kinase.